Consider the following 573-residue polypeptide: Solute carrier family 41 member 2 (573 aa).

The Extracellular portion of the chain corresponds to 1-162; sequence MTNSKGRSIT…KESSGIMALQ (162 aa). Residues serine 136 and serine 137 each carry the phosphoserine modification. A helical transmembrane segment spans residues 163 to 183; sequence ILVPFLLAGFGTVSAGMVLDI. The Cytoplasmic segment spans residues 184-195; sequence VQHWEVFRKVTE. The chain crosses the membrane as a helical span at residues 196–216; sequence VFILVPALLGLKGNLEMTLAS. The Extracellular segment spans residues 217 to 245; it reads RLSTAVNIGKMDSPIEKWNLIIGNLALKQ. A helical membrane pass occupies residues 246 to 266; the sequence is VQATVVGFLAAVAAIILGWIP. The Cytoplasmic portion of the chain corresponds to 267–282; sequence EGKYYLDHSILLCSSS. A helical membrane pass occupies residues 283-303; that stretch reads VATAFIASLLQGIIMVGVIVG. Topologically, residues 304-313 are extracellular; it reads SKKTGINPDN. Residues 314 to 334 form a helical membrane-spanning segment; the sequence is VATPIAASFGDLITLAILAWI. At 335 to 347 the chain is on the cytoplasmic side; that stretch reads SQGLYSCLETYYY. Residues 348-368 form a helical membrane-spanning segment; sequence ISPLVGVFFLALTPIWIIIAA. The Extracellular segment spans residues 369 to 376; the sequence is KHPATRTV. Residues 377-397 form a helical membrane-spanning segment; that stretch reads LHSGWEPVITAMVISSIGGLI. Over 398–406 the chain is Cytoplasmic; that stretch reads LDTTVSDPN. Residues 407 to 427 traverse the membrane as a helical segment; it reads LVGIVVYTPVINGIGGNLVAI. Over 428–469 the chain is Extracellular; the sequence is QASRISTYLHLHSIPGELPDEPKGCYYPFRTFFGPGVNNKSA. Residues 470–490 traverse the membrane as a helical segment; that stretch reads QVLLLLVIPGHLIFLYTIHLM. The Cytoplasmic portion of the chain corresponds to 491–498; it reads KSGHTSLT. Residues 499 to 519 traverse the membrane as a helical segment; the sequence is IIFIVVYLFAAVLQVFTLLWI. Residues 520–543 lie on the Extracellular side of the membrane; the sequence is ADWMVHHFWRKGKDPDSFSIPYLT. The chain crosses the membrane as a helical span at residues 544–564; that stretch reads ALGDLLGTALLALSFHFLWLI. At 565–573 the chain is on the cytoplasmic side; it reads GDRDGDVGD.

It belongs to the SLC41A transporter family.

Its subcellular location is the cell membrane. It carries out the reaction Mg(2+)(in) = Mg(2+)(out). The catalysed reaction is Mn(2+)(in) = Mn(2+)(out). It catalyses the reaction Co(2+)(in) = Co(2+)(out). The enzyme catalyses Ni(2+)(in) = Ni(2+)(out). It carries out the reaction Fe(2+)(in) = Fe(2+)(out). Acts as a plasma-membrane magnesium transporter. Can also mediate the transport of other divalent metal cations in an order of Ba(2+) &gt; Ni(2+) &gt; Co(2+) &gt; Fe(2+) &gt; Mn(2+). This chain is Solute carrier family 41 member 2 (SLC41A2), found in Macaca fascicularis (Crab-eating macaque).